Reading from the N-terminus, the 1823-residue chain is MSLPLLECKYVTEEFVREGKNGNYGTKLPSSVPMLRFLYELSWILVRGELPIQSCKAVLEGVEFLDKPSREELASCFADVVTQIAQDLTMSGDQRSRLIKLAKWLVESQTVPQRLFQERCEEEFLWEADMVKIKAQDLKGKEVRLNTRLLYQQTKFNLLREESEGYAKLATLLCRGSASSSHNASAATMGIIKSLIGHFDLDPNRVFDIVLDCFELEQDYDTFLNLIPIFPKSHASQILGFKFQYYQRLEVNSPVPVGLYKLTALLVKEEFINLESIYAHLLPKDEEVFEDYNVSSAKRFEEANKIGKINLAATGKDLMEDEKQGDVTVDLFAALDMESEAVTERLPELENNQTLGLLNGFLSVDDWYHANILFERLAPLNPVAHDQICSGLFRLIEKSITHSYRIARQTRFQSSSSASTVKLTPTANTTANRTYLDLPKEVFQMLVTVGPYLYRNTQLLQKICRVLRAYYLSALDLVRDGSNQEGSAYEVSRGHLKEVRLRVEEALGTCLLPSLQLVPANPAVGHEIWEVMSLLPYEARYRLYGEWEKDDEQNPLLLAARQVAKLDTRRILKRLAKENLKQLGRMVAKLAHANPMTVLRTIVNQIEAYRDMIAPVVDAFKYLTQLEYDILEYVVIERLAQSGRDKLKDDGINLSDWLQSLASFWGHLCKKYPSMELRGLFQYLVNQLKRGQGIELVLLQELVQQMANVQYTENLTEDQLDAMAGSETLRYHATSFGMMRNNKALIKSSNRLRDSLLPNDEPKLAIPLLLLIAQHRSLVVVNADAPYIKMVTEQFDRCHGILLQYVDFLSSAVSPTTAYARLVPSLDELVHTYHLEAEVAFLVFRPVMRLFKCRRNGDVSWPLDSGESMDADSEISESESSMILDVGTSEKAVTWSDVLDTVRTMLPSKAWNSLSPDLYATFWGLTLYDLHVPRNRYESEISKQHTALKTLEEVADNSSSAITKRKKEKERIQESLDRLTGELKKHEEHVASVRRRLSREKDTWLSSCPDTLKINMEFLQRCIFPRCTFSMADSVYCAMFVNMLHSLGTPFFNTVNHIDVLICKTLQPMICCCTEYEVGRLGRFLFETLKIAYHWKSKESVYEHECGNMPGFAVYYRYPNSQRVTFGQFVKVHWKWSGRITRLLIQCLESNEYMEIRNALIMLTKISGVFPVTRKTGINLEKRATKIKNDEREDLKVLATGVGAALSARKPHWVTDEEFSMGFLELKAPPVHTPKHASSQNGLLVGVSQGEPTGERATVNQQPESGGLGKDQMLKTKPLDGRTESIPSKSDQGHLKSKGGNPLDSQPSISKKSMEQKETDETPRISDENPVKPASKYSEAELKASSKRGASVNKSAKQDFGKDDGKSGKAIGRTSTADKDLNYLESRQSGLTKALSSTAANGSIATGSSKVKDDGAEALDAQKQSSRTVHSPRHEIVTSVRSSDRLQKRANAVEDSERISKRRKGDAEHKEHDSEPRSSDRDRSVEARLDLNKTVTDDQSTHRDQDRSKDKGYERQDRDHRERVDRSDKPRGDDVEKARDKSLERHGRERSVEKGLDKGTTRSYDRNKDERNKDDRSKLRHSEASLEKSHPDDHFHSQGLPPPPPLPPNIIPHSMAAKEDLERRAGGARHSQRLSPRHEEREKRRSEENLSVSVDDAKRRRDDDIRDRKRDDRETITVKGEEREREREREREREKSLPLKEDFEASKRRKLKREQQVPSAEPGEYSPMPHHSSLSTSMGPSSYEGRERKSSSMIQHGGYLEEPSIRLLGKEASSKMARRDPDPIAKSKSKNSNFLDIALESMTVNGKTTRGEQSGSGEIGSRE.

Positions 935 to 1003 form a coiled coil; that stretch reads NRYESEISKQ…RRRLSREKDT (69 aa). The short motif at 964–969 is the Nuclear localization signal element; the sequence is KRKKEK. Disordered regions lie at residues 1244–1382 and 1394–1823; these read LVGV…KDLN and ALSS…GSRE. Composition is skewed to basic and acidic residues over residues 1272–1283, 1312–1330, and 1356–1367; these read QMLKTKPLDGRT, KSMEQKETDETPRISDENP, and AKQDFGKDDGKS. Polar residues predominate over residues 1394–1409; it reads ALSSTAANGSIATGSS. A compositionally biased stretch (basic and acidic residues) spans 1432 to 1596; sequence PRHEIVTSVR…EKSHPDDHFH (165 aa). The span at 1600–1610 shows a compositional bias: pro residues; that stretch reads LPPPPPLPPNI. Composition is skewed to basic and acidic residues over residues 1616–1625, 1636–1648, 1655–1706, and 1768–1785; these read AAKEDLERRA, PRHEEREKRRSEE, DDAK…FEAS, and LGKEASSKMARRDPDPIA. 2 positions are modified to phosphoserine: Ser1646 and Ser1696. Polar residues predominate over residues 1802–1816; that stretch reads MTVNGKTTRGEQSGS.

The protein belongs to the THOC2 family. Component of the THO complex, which is composed of THO1, THO2, THO3, THO5, THO6 and THO7.

It localises to the nucleus. Its function is as follows. Acts as a component of the THO subcomplex of the TREX complex which is thought to couple mRNA transcription, processing and nuclear export. The chain is THO complex subunit 2 (THO2) from Arabidopsis thaliana (Mouse-ear cress).